The chain runs to 226 residues: ATP-dependent dethiobiotin synthetase BioD (226 aa).

Residue glutamate 12–valine 17 participates in ATP binding. Residue threonine 16 coordinates Mg(2+). Residue lysine 39 is part of the active site. Residue threonine 43 participates in substrate binding. ATP is bound by residues aspartate 47, glutamate 108 to glycine 111, asparagine 168 to cysteine 169, and proline 200 to isoleucine 202. The Mg(2+) site is built by aspartate 47 and glutamate 108.

The protein belongs to the dethiobiotin synthetase family. As to quaternary structure, homodimer. It depends on Mg(2+) as a cofactor.

The protein localises to the cytoplasm. It catalyses the reaction (7R,8S)-7,8-diammoniononanoate + CO2 + ATP = (4R,5S)-dethiobiotin + ADP + phosphate + 3 H(+). The enzyme catalyses (7R,8S)-8-amino-7-(carboxyamino)nonanoate + ATP = (4R,5S)-dethiobiotin + ADP + phosphate + H(+). The protein operates within cofactor biosynthesis; biotin biosynthesis; biotin from 7,8-diaminononanoate: step 1/2. In terms of biological role, catalyzes a mechanistically unusual reaction, the ATP-dependent insertion of CO2 between the N7 and N8 nitrogen atoms of 7,8-diaminopelargonic acid (DAPA, also called 7,8-diammoniononanoate) to form a ureido ring. This cyanobacterium does not encode bioA (which catalyzes the formation of the precursor for this reaction in the cannonical pathway), instead it encodes bioU, which replaces bioA and also performs the first half of the cannonical BioD reaction. Thus in this organism BioD has a different substrate. In Gloeothece citriformis (strain PCC 7424) (Cyanothece sp. (strain PCC 7424)), this protein is ATP-dependent dethiobiotin synthetase BioD.